The chain runs to 704 residues: Polyribonucleotide nucleotidyltransferase (704 aa).

Residues D488 and D494 each coordinate Mg(2+). The region spanning 555–614 (PRITTIKINPEKIRDVIGKGGATIRALTEETGTTIELDDDGTVKIASSNGEATKEAIRRI) is the KH domain. In terms of domain architecture, S1 motif spans 624 to 692 (GTVYNGKVVR…RQGRVRLSMK (69 aa)).

This sequence belongs to the polyribonucleotide nucleotidyltransferase family. Component of the RNA degradosome, which is a multiprotein complex involved in RNA processing and mRNA degradation. The cofactor is Mg(2+).

It is found in the cytoplasm. The catalysed reaction is RNA(n+1) + phosphate = RNA(n) + a ribonucleoside 5'-diphosphate. Its function is as follows. Involved in mRNA degradation. Catalyzes the phosphorolysis of single-stranded polyribonucleotides processively in the 3'- to 5'-direction. This Shewanella pealeana (strain ATCC 700345 / ANG-SQ1) protein is Polyribonucleotide nucleotidyltransferase.